Here is a 234-residue protein sequence, read N- to C-terminus: ATP-dependent dethiobiotin synthetase BioD (234 aa).

ATP is bound at residue G12 to I17. T16 is a binding site for Mg(2+). The active site involves K39. Residue T43 coordinates substrate. ATP contacts are provided by residues D47, E108–G111, S168–C169, and P200–L202. Mg(2+) contacts are provided by D47 and E108.

The protein belongs to the dethiobiotin synthetase family. As to quaternary structure, homodimer. Requires Mg(2+) as cofactor.

It localises to the cytoplasm. It catalyses the reaction (7R,8S)-7,8-diammoniononanoate + CO2 + ATP = (4R,5S)-dethiobiotin + ADP + phosphate + 3 H(+). It carries out the reaction (7R,8S)-8-amino-7-(carboxyamino)nonanoate + ATP = (4R,5S)-dethiobiotin + ADP + phosphate + H(+). Its pathway is cofactor biosynthesis; biotin biosynthesis; biotin from 7,8-diaminononanoate: step 1/2. Its function is as follows. Catalyzes a mechanistically unusual reaction, the ATP-dependent insertion of CO2 between the N7 and N8 nitrogen atoms of 7,8-diaminopelargonic acid (DAPA, also called 7,8-diammoniononanoate) to form a ureido ring. This cyanobacterium does not encode bioA (which catalyzes the formation of the precursor for this reaction in the cannonical pathway), instead it encodes bioU, which replaces bioA and also performs the first half of the cannonical BioD reaction. Thus in this organism BioD has a different substrate. The sequence is that of ATP-dependent dethiobiotin synthetase BioD from Rippkaea orientalis (strain PCC 8801 / RF-1) (Cyanothece sp. (strain PCC 8801)).